The sequence spans 1093 residues: Semaphorin 5c (1093 aa).

Residues 1 to 34 (MNMLILKLPKMFSQLWLLLILSLLTLEGPQPSTG) form the signal peptide. Residue asparagine 48 is glycosylated (N-linked (GlcNAc...) asparagine). The region spanning 50–495 (SRYISYQDLM…TDLALTRIPA (446 aa)) is the Sema domain. Disulfide bonds link cysteine 118/cysteine 128 and cysteine 146/cysteine 155. 4 N-linked (GlcNAc...) asparagine glycosylation sites follow: asparagine 162, asparagine 182, asparagine 285, and asparagine 295. Disulfide bonds link cysteine 271-cysteine 376 and cysteine 296-cysteine 338. Residue asparagine 341 is glycosylated (N-linked (GlcNAc...) asparagine). The 50-residue stretch at 497 to 546 (HCSRHVSQSSCLNSMDPYCGWNELVERCMPQPQDSSVLQHWHQAPQITCP) folds into the PSI domain. TSP type-1 domains follow at residues 553–605 (DGGW…TNCT), 607–663 (HGGW…PPCP), and 671–726 (DGGW…QSCQ). Asparagine 603 carries an N-linked (GlcNAc...) asparagine glycan. Intrachain disulfides connect cysteine 619–cysteine 656, cysteine 623–cysteine 662, cysteine 634–cysteine 646, cysteine 683–cysteine 720, cysteine 687–cysteine 725, and cysteine 698–cysteine 710. Residue asparagine 745 is glycosylated (N-linked (GlcNAc...) asparagine). TSP type-1 domains are found at residues 794-834 (DSAD…HACP), 850-901 (HGEW…VPCE), and 904-953 (LGWS…NECE). 3 disulfides stabilise this stretch: cysteine 862/cysteine 895, cysteine 866/cysteine 900, and cysteine 877/cysteine 885. A helical membrane pass occupies residues 960–980 (TATLPIVIFVGLLFTVACCLA). Asparagine 998 and asparagine 1046 each carry an N-linked (GlcNAc...) asparagine glycan. A disordered region spans residues 1018–1056 (PTKDYYDQRPKRQSSFRMPAKTSNLGNGNGTLNRNNMHQ). Low complexity predominate over residues 1041–1053 (NLGNGNGTLNRNN).

It belongs to the semaphorin family. In terms of tissue distribution, in egg chambers, high levels of expression in the follicle cells, with little to no expression in the germ cells (at protein level). In stage 3 to 7 egg chambers, planar polarized at the basal epithelial surface (at protein level).

It is found in the apical cell membrane. It localises to the lateral cell membrane. Its subcellular location is the endosome. Functionally, regulates the motility of migrating epithelial cells by providing guidance cues within the migratory environment and may also play a role in development of the olfactory system. May act as a positive axonal guidance cue. Function in neurons is essential for adult survival and is important for climbing behavior. Promotes collective migration of follicular epithelial cells in egg chambers, likely by acting at the leading edge of the basal epithelium cells to provide guidance cues across the cell boundary to the trailing edge of the cell ahead. The transmembrane receptor PlexA on the trailing edge of the cell ahead, appears to transduce this signal to suppress the formation of protrusions. Involved in olfactory avoidance behavior. The protein is Semaphorin 5c of Drosophila melanogaster (Fruit fly).